Here is a 122-residue protein sequence, read N- to C-terminus: Large ribosomal subunit protein uL14c (122 aa).

It belongs to the universal ribosomal protein uL14 family. In terms of assembly, part of the 50S ribosomal subunit.

The protein resides in the plastid. Its function is as follows. Binds to 23S rRNA. In Cuscuta gronovii (Common dodder), this protein is Large ribosomal subunit protein uL14c.